Consider the following 264-residue polypeptide: Major prion protein (264 aa).

The signal sequence occupies residues 1–24; that stretch reads MVKRHIGSWILVLFVVMWSDVGLC. Residues 25–241 are interaction with GRB2, ERI3 and SYN1; the sequence is KKRPKPGGGW…ESQAYYQRGA (217 aa). Positions 27–119 are disordered; sequence RPKPGGGWNT…WNKPSKPKTN (93 aa). 6 consecutive repeat copies span residues 54–62, 63–70, 71–78, 79–86, 87–94, and 95–103. Residues 54 to 103 are 6 X 8 AA tandem repeats of P-H-G-G-G-W-G-Q; sequence SQGGGGWGQPHGGGWGQPHGGGWGQPHGGGWGQPHGGGWGQPHGGGGWGQ. A compositionally biased stretch (gly residues) spans 55 to 105; the sequence is QGGGGWGQPHGGGWGQPHGGGWGQPHGGGWGQPHGGGWGQPHGGGGWGQGG. Residues histidine 72, glycine 73, glycine 74, histidine 80, glycine 81, glycine 82, histidine 88, glycine 89, glycine 90, histidine 96, glycine 98, and glycine 99 each contribute to the Cu(2+) site. The cysteines at positions 190 and 225 are disulfide-linked. Residues asparagine 192 and asparagine 208 are each glycosylated (N-linked (GlcNAc...) asparagine). Alanine 241 is lipidated: GPI-anchor amidated alanine. The propeptide at 242 to 264 is removed in mature form; the sequence is SVILFSSPPVILLISLLIFLIVG.

This sequence belongs to the prion family. In terms of assembly, monomer and homodimer. Has a tendency to aggregate into amyloid fibrils containing a cross-beta spine, formed by a steric zipper of superposed beta-strands. Soluble oligomers may represent an intermediate stage on the path to fibril formation. Copper binding may promote oligomerization. Interacts with GRB2, APP, ERI3/PRNPIP and SYN1. Mislocalized cytosolically exposed PrP interacts with MGRN1; this interaction alters MGRN1 subcellular location and causes lysosomal enlargement. Interacts with KIAA1191.

Its subcellular location is the cell membrane. The protein resides in the golgi apparatus. Its function is as follows. Its primary physiological function is unclear. Has cytoprotective activity against internal or environmental stresses. May play a role in neuronal development and synaptic plasticity. May be required for neuronal myelin sheath maintenance. May play a role in iron uptake and iron homeostasis. Soluble oligomers are toxic to cultured neuroblastoma cells and induce apoptosis (in vitro). Association with GPC1 (via its heparan sulfate chains) targets PRNP to lipid rafts. Also provides Cu(2+) or Zn(2+) for the ascorbate-mediated GPC1 deaminase degradation of its heparan sulfate side chains. This chain is Major prion protein (PRNP), found in Bubalus bubalis (Domestic water buffalo).